Consider the following 88-residue polypeptide: UPF0297 protein SPCG_0205 (88 aa).

It belongs to the UPF0297 family.

This Streptococcus pneumoniae (strain CGSP14) protein is UPF0297 protein SPCG_0205.